A 376-amino-acid chain; its full sequence is Queuine tRNA-ribosyltransferase (376 aa).

Residue Asp89 is the Proton acceptor of the active site. Substrate is bound by residues 89–93, Asp143, Gln187, and Gly214; that span reads DSGGF. The segment at 245 to 251 is RNA binding; sequence GVGKPQD. The active-site Nucleophile is the Asp264. The segment at 269–273 is RNA binding; important for wobble base 34 recognition; sequence TRNAR. The Zn(2+) site is built by Cys302, Cys304, Cys307, and His333.

Belongs to the queuine tRNA-ribosyltransferase family. As to quaternary structure, homodimer. Within each dimer, one monomer is responsible for RNA recognition and catalysis, while the other monomer binds to the replacement base PreQ1. Zn(2+) serves as cofactor.

It catalyses the reaction 7-aminomethyl-7-carbaguanine + guanosine(34) in tRNA = 7-aminomethyl-7-carbaguanosine(34) in tRNA + guanine. It functions in the pathway tRNA modification; tRNA-queuosine biosynthesis. Its function is as follows. Catalyzes the base-exchange of a guanine (G) residue with the queuine precursor 7-aminomethyl-7-deazaguanine (PreQ1) at position 34 (anticodon wobble position) in tRNAs with GU(N) anticodons (tRNA-Asp, -Asn, -His and -Tyr). Catalysis occurs through a double-displacement mechanism. The nucleophile active site attacks the C1' of nucleotide 34 to detach the guanine base from the RNA, forming a covalent enzyme-RNA intermediate. The proton acceptor active site deprotonates the incoming PreQ1, allowing a nucleophilic attack on the C1' of the ribose to form the product. After dissociation, two additional enzymatic reactions on the tRNA convert PreQ1 to queuine (Q), resulting in the hypermodified nucleoside queuosine (7-(((4,5-cis-dihydroxy-2-cyclopenten-1-yl)amino)methyl)-7-deazaguanosine). In Erwinia tasmaniensis (strain DSM 17950 / CFBP 7177 / CIP 109463 / NCPPB 4357 / Et1/99), this protein is Queuine tRNA-ribosyltransferase.